The primary structure comprises 40 residues: Large ribosomal subunit protein bL36 (40 aa).

Belongs to the bacterial ribosomal protein bL36 family.

This chain is Large ribosomal subunit protein bL36, found in Corynebacterium urealyticum (strain ATCC 43042 / DSM 7109).